Here is a 241-residue protein sequence, read N- to C-terminus: Uridylate kinase (241 aa).

K15 to G18 is an ATP binding site. The involved in allosteric activation by GTP stretch occupies residues G23–G28. UMP is bound at residue G57. ATP is bound by residues G58 and R62. UMP-binding positions include D77 and T138–T145. T165, Y171, and D174 together coordinate ATP.

It belongs to the UMP kinase family. Homohexamer.

It localises to the cytoplasm. The enzyme catalyses UMP + ATP = UDP + ADP. It participates in pyrimidine metabolism; CTP biosynthesis via de novo pathway; UDP from UMP (UMPK route): step 1/1. Its activity is regulated as follows. Allosterically activated by GTP. Inhibited by UTP. Catalyzes the reversible phosphorylation of UMP to UDP. In Yersinia pseudotuberculosis serotype O:1b (strain IP 31758), this protein is Uridylate kinase.